The chain runs to 497 residues: Glycerol kinase (497 aa).

Thr12 is an ADP binding site. ATP-binding residues include Thr12, Thr13, and Ser14. Thr12 contributes to the sn-glycerol 3-phosphate binding site. Arg16 contributes to the ADP binding site. Sn-glycerol 3-phosphate is bound by residues Arg82, Glu83, Tyr134, and Asp243. Glycerol contacts are provided by Arg82, Glu83, Tyr134, Asp243, and Gln244. Thr265 and Gly308 together coordinate ADP. Residues Thr265, Gly308, Gln312, and Gly411 each coordinate ATP. Gly411 contacts ADP.

The protein belongs to the FGGY kinase family.

It catalyses the reaction glycerol + ATP = sn-glycerol 3-phosphate + ADP + H(+). It functions in the pathway polyol metabolism; glycerol degradation via glycerol kinase pathway; sn-glycerol 3-phosphate from glycerol: step 1/1. With respect to regulation, inhibited by fructose 1,6-bisphosphate (FBP). Functionally, key enzyme in the regulation of glycerol uptake and metabolism. Catalyzes the phosphorylation of glycerol to yield sn-glycerol 3-phosphate. The polypeptide is Glycerol kinase (Allorhizobium ampelinum (strain ATCC BAA-846 / DSM 112012 / S4) (Agrobacterium vitis (strain S4))).